Reading from the N-terminus, the 273-residue chain is Large ribosomal subunit protein uL2 (273 aa).

The tract at residues 228-273 (VDHPHGGGEGKTSGGRHPVTPWGFPTKGKKTRKNKRTSKFIVKKRK) is disordered. Over residues 254–273 (KGKKTRKNKRTSKFIVKKRK) the composition is skewed to basic residues.

Belongs to the universal ribosomal protein uL2 family. As to quaternary structure, part of the 50S ribosomal subunit. Forms a bridge to the 30S subunit in the 70S ribosome.

Functionally, one of the primary rRNA binding proteins. Required for association of the 30S and 50S subunits to form the 70S ribosome, for tRNA binding and peptide bond formation. It has been suggested to have peptidyltransferase activity; this is somewhat controversial. Makes several contacts with the 16S rRNA in the 70S ribosome. The sequence is that of Large ribosomal subunit protein uL2 from Rickettsia akari (strain Hartford).